Here is a 141-residue protein sequence, read N- to C-terminus: Nucleoside diphosphate kinase (141 aa).

Residues Lys-11, Phe-59, Arg-87, Thr-93, Arg-104, and Asn-114 each contribute to the ATP site. Residue His-117 is the Pros-phosphohistidine intermediate of the active site.

This sequence belongs to the NDK family. Homotetramer. Mg(2+) is required as a cofactor.

The protein resides in the cytoplasm. It catalyses the reaction a 2'-deoxyribonucleoside 5'-diphosphate + ATP = a 2'-deoxyribonucleoside 5'-triphosphate + ADP. The enzyme catalyses a ribonucleoside 5'-diphosphate + ATP = a ribonucleoside 5'-triphosphate + ADP. Functionally, major role in the synthesis of nucleoside triphosphates other than ATP. The ATP gamma phosphate is transferred to the NDP beta phosphate via a ping-pong mechanism, using a phosphorylated active-site intermediate. The sequence is that of Nucleoside diphosphate kinase from Azoarcus sp. (strain BH72).